The sequence spans 747 residues: Pseudouridine-metabolizing bifunctional protein C1861.05 (747 aa).

Residues 1 to 379 (MLIVMNRGCR…KVSDKGVSSS (379 aa)) form a pseudouridine-5'-phosphate glycosidase region. Glu61 acts as the Proton donor; for PsiMP glycosidase activity in catalysis. Substrate contacts are provided by Lys123 and Val143. A Mn(2+)-binding site is contributed by Asp175. Position 177-179 (177-179 (SAD)) interacts with substrate. The Nucleophile; for PsiMP glycosidase activity role is filled by Lys196. The interval 380-747 (KKKITETTSK…VNPEIKTLLK (368 aa)) is pseudouridine kinase.

It in the N-terminal section; belongs to the pseudouridine-5'-phosphate glycosidase family. In the C-terminal section; belongs to the carbohydrate kinase PfkB family. Requires Mn(2+) as cofactor.

The protein resides in the cytoplasm. It catalyses the reaction D-ribose 5-phosphate + uracil = psi-UMP + H2O. The catalysed reaction is pseudouridine + ATP = psi-UMP + ADP + H(+). Functionally, bifunctional enzyme that catalyzes the phosphorylation of pseudouridine to pseudouridine 5'-phosphate (PsiMP), and the reversible cleavage of pseudouridine 5'-phosphate to ribose 5-phosphate and uracil. Is involved in a pseudouridine degradation pathway. This chain is Pseudouridine-metabolizing bifunctional protein C1861.05, found in Schizosaccharomyces pombe (strain 972 / ATCC 24843) (Fission yeast).